The chain runs to 620 residues: Arginine--tRNA ligase (620 aa).

Positions 147-157 (ANPTGPIHIGG) match the 'HIGH' region motif.

This sequence belongs to the class-I aminoacyl-tRNA synthetase family. As to quaternary structure, monomer.

The protein localises to the cytoplasm. The enzyme catalyses tRNA(Arg) + L-arginine + ATP = L-arginyl-tRNA(Arg) + AMP + diphosphate. The polypeptide is Arginine--tRNA ligase (Bifidobacterium longum (strain NCC 2705)).